The primary structure comprises 196 residues: DNA replication complex GINS protein PSF1 (196 aa).

It belongs to the GINS1/PSF1 family. As to quaternary structure, component of the GINS complex which is a heterotetramer of GINS1, GINS2, GINS3 and GINS4. Forms a stable subcomplex with GINS4. GINS complex interacts with DNA primase in vitro. Component of the CMG helicase complex, a hexameric ring of related MCM2-7 subunits stabilized by CDC45 and the tetrameric GINS complex.

It is found in the nucleus. The protein localises to the chromosome. Its function is as follows. Required for correct functioning of the GINS complex, a complex that plays an essential role in the initiation of DNA replication, and progression of DNA replication forks. GINS complex is a core component of CDC45-MCM-GINS (CMG) helicase, the molecular machine that unwinds template DNA during replication, and around which the replisome is built. This chain is DNA replication complex GINS protein PSF1 (GINS1), found in Bos taurus (Bovine).